The following is an 86-amino-acid chain: MRLLARLIALPVRGYRLLFSPWVGFNCRYQPTCSAYALDALERHGPFKGTYLMLRRIGRCHPFGGSGYDPVPGADPKHDRCCGRTP.

Belongs to the UPF0161 family.

It is found in the cell inner membrane. In terms of biological role, could be involved in insertion of integral membrane proteins into the membrane. This Ruegeria sp. (strain TM1040) (Silicibacter sp.) protein is Putative membrane protein insertion efficiency factor.